Here is a 103-residue protein sequence, read N- to C-terminus: Small ribosomal subunit protein uS10 (103 aa).

It belongs to the universal ribosomal protein uS10 family. Part of the 30S ribosomal subunit.

Involved in the binding of tRNA to the ribosomes. This Hahella chejuensis (strain KCTC 2396) protein is Small ribosomal subunit protein uS10.